A 295-amino-acid polypeptide reads, in one-letter code: Lipoyl synthase (295 aa).

Residues Cys34, Cys39, Cys45, Cys60, Cys64, Cys67, and Ser273 each contribute to the [4Fe-4S] cluster site. Positions 46–262 constitute a Radical SAM core domain; sequence WNKRHATIMV…KRMAYAKGFS (217 aa).

The protein belongs to the radical SAM superfamily. Lipoyl synthase family. Requires [4Fe-4S] cluster as cofactor.

Its subcellular location is the cytoplasm. The catalysed reaction is [[Fe-S] cluster scaffold protein carrying a second [4Fe-4S](2+) cluster] + N(6)-octanoyl-L-lysyl-[protein] + 2 oxidized [2Fe-2S]-[ferredoxin] + 2 S-adenosyl-L-methionine + 4 H(+) = [[Fe-S] cluster scaffold protein] + N(6)-[(R)-dihydrolipoyl]-L-lysyl-[protein] + 4 Fe(3+) + 2 hydrogen sulfide + 2 5'-deoxyadenosine + 2 L-methionine + 2 reduced [2Fe-2S]-[ferredoxin]. The protein operates within protein modification; protein lipoylation via endogenous pathway; protein N(6)-(lipoyl)lysine from octanoyl-[acyl-carrier-protein]: step 2/2. In terms of biological role, catalyzes the radical-mediated insertion of two sulfur atoms into the C-6 and C-8 positions of the octanoyl moiety bound to the lipoyl domains of lipoate-dependent enzymes, thereby converting the octanoylated domains into lipoylated derivatives. This is Lipoyl synthase from Anaplasma phagocytophilum (strain HZ).